Consider the following 82-residue polypeptide: MTRILLLLLRFYQYFISPLLGNNCRFHPTCSEYAKEAISMHGSIKGLWFTFKRIIKCQPFCDGGYDTVPISIKNSKPLNKKI.

This sequence belongs to the UPF0161 family.

The protein resides in the cell inner membrane. Its function is as follows. Could be involved in insertion of integral membrane proteins into the membrane. The sequence is that of Putative membrane protein insertion efficiency factor from Rickettsia rickettsii (strain Iowa).